We begin with the raw amino-acid sequence, 500 residues long: Glucose-1-phosphate adenylyltransferase small subunit 1, chloroplastic/amyloplastic (500 aa).

The N-terminal 50 residues, 1-50, are a transit peptide targeting the chloroplast; it reads MAMMAMGAASWAPIPAPARAAAAFYPGRDLAAARRRRGAAARRPFVFTPR.

It belongs to the bacterial/plant glucose-1-phosphate adenylyltransferase family. Heterotetramer composed of two small and two large subunits. In terms of tissue distribution, expressed in leaves.

The protein resides in the plastid. Its subcellular location is the chloroplast. It is found in the amyloplast. It catalyses the reaction alpha-D-glucose 1-phosphate + ATP + H(+) = ADP-alpha-D-glucose + diphosphate. Its pathway is glycan biosynthesis; starch biosynthesis. Activated by 3'phosphoglycerate, inhibited by orthophosphate. Allosteric regulation. Functionally, involved in synthesis of starch. Catalyzes the synthesis of ADP-glucose, a molecule that serves as an activated glycosyl donor for alpha-1,4-glucan synthesis. Essential for starch synthesis in leaf chloroplasts and endosperm amyloplasts. The sequence is that of Glucose-1-phosphate adenylyltransferase small subunit 1, chloroplastic/amyloplastic from Oryza sativa subsp. japonica (Rice).